Reading from the N-terminus, the 669-residue chain is DNA mismatch repair protein MutL (669 aa).

Residues 356–382 form a disordered region; the sequence is FEQRQNTENNQEKTFSSEESNSKPFME. Positions 361-378 are enriched in polar residues; that stretch reads NTENNQEKTFSSEESNSK.

The protein belongs to the DNA mismatch repair MutL/HexB family.

In terms of biological role, this protein is involved in the repair of mismatches in DNA. It is required for dam-dependent methyl-directed DNA mismatch repair. May act as a 'molecular matchmaker', a protein that promotes the formation of a stable complex between two or more DNA-binding proteins in an ATP-dependent manner without itself being part of a final effector complex. This is DNA mismatch repair protein MutL from Staphylococcus aureus (strain USA300).